We begin with the raw amino-acid sequence, 73 residues long: Sec-independent protein translocase protein TatA (73 aa).

The helical transmembrane segment at 1-21 (MGLSWQQLLILLLVVVVIFGT) threads the bilayer.

Belongs to the TatA/E family. The Tat system comprises two distinct complexes: a TatABC complex, containing multiple copies of TatA, TatB and TatC subunits, and a separate TatA complex, containing only TatA subunits. Substrates initially bind to the TatABC complex, which probably triggers association of the separate TatA complex to form the active translocon.

Its subcellular location is the cell inner membrane. Part of the twin-arginine translocation (Tat) system that transports large folded proteins containing a characteristic twin-arginine motif in their signal peptide across membranes. TatA could form the protein-conducting channel of the Tat system. The protein is Sec-independent protein translocase protein TatA of Histophilus somni (strain 129Pt) (Haemophilus somnus).